Reading from the N-terminus, the 352-residue chain is Very-long-chain 3-oxoacyl-CoA reductase (352 aa).

A helical membrane pass occupies residues 20–40; sequence TLWFIFIFGLLKLVPFALRFL. NADP(+) is bound by residues Val-66, Asp-120, Asn-147, Tyr-228, Lys-232, Val-261, and Ser-263. The active-site Proton donor is the Tyr-228. Lys-232 functions as the Lowers pKa of active site Tyr in the catalytic mechanism.

The protein belongs to the short-chain dehydrogenases/reductases (SDR) family.

Its subcellular location is the endoplasmic reticulum membrane. The catalysed reaction is a very-long-chain (3R)-3-hydroxyacyl-CoA + NADP(+) = a very-long-chain 3-oxoacyl-CoA + NADPH + H(+). It functions in the pathway lipid metabolism; fatty acid biosynthesis. Functionally, component of the microsomal membrane bound fatty acid elongation system, which produces the 26-carbon very long-chain fatty acids (VLCFA) from palmitate. Catalyzes the reduction of the 3-ketoacyl-CoA intermediate that is formed in each cycle of fatty acid elongation. VLCFAs serve as precursors for ceramide and sphingolipids. The chain is Very-long-chain 3-oxoacyl-CoA reductase from Candida glabrata (strain ATCC 2001 / BCRC 20586 / JCM 3761 / NBRC 0622 / NRRL Y-65 / CBS 138) (Yeast).